The chain runs to 521 residues: Circadian clock oscillator protein KaiC (521 aa).

2 consecutive KaiC domains span residues 1 to 248 (MNEP…INIF) and 262 to 521 (ARIS…LDEE). Residues glycine 50, threonine 51, glycine 52, lysine 53, threonine 54, leucine 55, serine 90, lysine 225, leucine 226, arginine 227, threonine 229, histidine 231, threonine 241, threonine 291, glycine 292, threonine 293, glycine 294, lysine 295, threonine 296, and leucine 297 each coordinate ATP. Residue threonine 54 coordinates Mg(2+). Position 296 (threonine 296) interacts with Mg(2+). Glutamate 319 serves as a coordination point for Mg(2+). Tryptophan 332 is a binding site for ATP. Serine 432 carries the post-translational modification Phosphoserine; by autocatalysis. The residue at position 433 (threonine 433) is a Phosphothreonine; by autocatalysis. ATP is bound by residues arginine 452, lysine 458, methionine 459, arginine 460, serine 462, histidine 464, and lysine 466.

The protein belongs to the KaiC family. As to quaternary structure, homohexamer; hexamerization is dependent on ATP-binding. The KaiABC complex composition changes during the circadian cycle to control KaiC phosphorylation. Complexes KaiC(6), KaiA(2-4):KaiC(6), KaiB(6):KaiC(6) and KaiC(6):KaiB(6):KaiA(12) are among the most important forms, many form cooperatively. KaiC interacts with SasA, activating its autokinase function and leading to RpaA activation. It depends on Mg(2+) as a cofactor. Post-translationally, phosphorylated on serine and threonine residues by autocatalysis. Has a 4 step phosphorylation cycle; the autokinase acts first on Thr-433, then Ser-432. When Ser-432 is modified KaiC switches to an autophosphatase mode, acting first on phospho-Thr-433 then phospho-Ser-432.

It catalyses the reaction L-seryl-[protein] + ATP = O-phospho-L-seryl-[protein] + ADP + H(+). The catalysed reaction is L-threonyl-[protein] + ATP = O-phospho-L-threonyl-[protein] + ADP + H(+). The enzyme catalyses ATP + H2O = ADP + phosphate + H(+). Its activity is regulated as follows. The interaction with KaiA enhances its phosphorylation status, while the interaction with KaiB decreases it. In terms of biological role, central component of the KaiABC oscillator complex, which constitutes the main circadian regulator in cyanobacteria. Complex composition changes during the circadian cycle to control KaiC phosphorylation. KaiA stimulates KaiC autophosphorylation, while KaiB sequesters KaiA, leading to KaiC autodephosphorylation. Clock output pathways impact the RpaA transcriptional regulator. KaiC enhances the autophosphorylation activity of SasA, which then transfers its phosphate group to RpaA to activate it. KaiB and KaiC together enhance the phospho-RpaA dephosphatase activity of CikA. Functionally, has a weak, temperature-independent ATPase activity; ATPase activity defines the circadian period. The phosphorylation state of KaiC modulates its ATPase activity and effects KaiB binding. The polypeptide is Circadian clock oscillator protein KaiC (Rippkaea orientalis (strain PCC 8801 / RF-1) (Cyanothece sp. (strain PCC 8801))).